A 442-amino-acid polypeptide reads, in one-letter code: Galactose/N-acetylgalactosamine-binding lectin CEL-III (442 aa).

Residues 1 to 10 (MVSLVPCGFA) constitute a propeptide, removed in mature form. Gln11 bears the Pyrrolidone carboxylic acid mark. The interval 11-304 (QVLCTNPLDI…DWEVPTATWN (294 aa)) is has hemagglutinating activity towards rabbit erythrocytes, but no hemolytic activity towards them. 3 disulfide bridges follow: Cys14-Cys59, Cys31-Cys48, and Cys72-Cys88. D-galactose-binding positions include Asp19 and 33–36 (DIVG). Ricin B-type lectin domains lie at 28 to 102 (SKQC…RWRL) and 115 to 245 (EQVA…WSRP). The Ca(2+) site is built by Asp33, Ile34, and Gly36. 2 residues coordinate Mg(2+): Asn42 and Ile43. Residue Asp49 coordinates D-galactose. Residue Asp53 coordinates Ca(2+). The Mg(2+) site is built by Asn82 and Val83. D-galactose is bound by residues Val117 and 131 to 134 (DVEG). A disulfide bridge links Cys129 with Cys146. Residues Asp131, Val132, and Gly134 each coordinate Ca(2+). A Mg(2+)-binding site is contributed by Ile141. Residue 144–147 (YDCQ) participates in D-galactose binding. The Ca(2+) site is built by Asp151, Asp178, Val179, and Gly181. A disulfide bond links Cys176 and Cys193. A D-galactose-binding site is contributed by 178–181 (DVEG). Residues Asn187 and Val188 each contribute to the Mg(2+) site. 191–194 (YSCE) serves as a coordination point for D-galactose. Positions 198, 219, 220, and 222 each coordinate Ca(2+). Cys217 and Cys234 are disulfide-bonded. A D-galactose-binding site is contributed by 219-222 (DVEG). The Mg(2+) site is built by Asn228 and Val229. Position 232–235 (232–235 (YRCD)) interacts with D-galactose. Asp239 contacts Ca(2+). 2 cysteine pairs are disulfide-bonded: Cys249/Cys254 and Cys264/Cys281. Residues 261–293 (SNKCLDVSGDQGTGDVGTWQCDGLPDQRFKWVF) enclose the Ricin B-type lectin 3 domain. Ca(2+)-binding residues include Asp266, Val267, and Gly269. 266–269 (DVSG) contributes to the D-galactose binding site. Residues Asp275 and Val276 each coordinate Mg(2+). Residues 279–282 (WQCD) and Asp286 each bind D-galactose. A Ca(2+)-binding site is contributed by Asp286. Residues 294–442 (DDWEVPTATW…NEDCTFCTDI (149 aa)) form a has a strong tendency to self-associate leading to formation of oligomers region. Cystine bridges form between Cys308-Cys390, Cys377-Cys416, Cys425-Cys439, and Cys431-Cys436.

In terms of assembly, oligomerizes in the human and rabbit erythrocyte membranes. Oligomerization is induced by binding of beta-1,4-linked disaccharide ligands such as lactose, lactulose, N-acetyllactosamine and phenyl-beta-D-galactoside, but only a little by N-acetylgalactosamine and galactose, and not at all by melibiose in aqueous solution in the presence of high salt concentration and pH 10. Forms heptamers that assemble into larger 21mer oligomers, which may be inserted as a transmembrane pore to the erythrocyte membrane. It depends on Ca(2+) as a cofactor. Mg(2+) serves as cofactor. Expressed in body fluid (at protein level).

It localises to the secreted. Its activity is regulated as follows. Ca(2+) is required for hemolytic activity and the activity increases with increasing calcium concentration. Hemolytic activity is inhibited by N-acetylgalactosamine (GalNAc), lactose, lactulose, galactosamine, dextran with molecular masses greater than 4 kDa, to a lesser extent by inulin and only slightly by sucrose and melezitose, but not by glucose or mannose. The activity is abolished in the presence of 10 mM EDTA. Lactose-binding increases with increasing calcium concentration, but calcium has no effect on hemagglutinating activity. Cytotoxic effect on Madin-Darby canine kidney (MDCK) cell line is strongly inhibited by galactose, lactose and N-acetylgalactosamine (GalNAc), but not by raffinose, N-acetylglucosamine (GlcNAc), glucose, mannose, ribose or sucrose. Pore formation in artificial lactosyl ceramide (LacCer) or globotetraosylceramide (Gb4Cer) containing liposomes is strongly inhibited by lactose. In terms of biological role, galactose/N-acetylgalactosamine (Gal/GalNAc)-binding lectin with hemolytic activity. Favors saccharides that have a beta-1,4 linkage at the non-reducing end rather than saccharides having alpha-1,6 or alpha-1,4 linkages. Binds lactose, lactulose, GalNAc, galactosamine, methyl alpha-galactopyranoside, methyl beta-galactopyranoside, N-acetyllactosamine, p-nitrophenyl beta-D-galactopyranoside (pNP-Gal), p-nitrophenyl N-acetyl-beta-D-galactosaminide (pNP-GalNAc), asialofetuin, and human erythrocyte membrane lipids lactosyl ceramide (LacCer) and globoside globotetraosylceramide (Gb4Cer). Binds moderately to galactose, melibiose, raffinose, fucose, methyl alpha-galactoside and methyl beta-galactoside. Binds weakly to glucose, mannose and N-acetylglucosamine (GlcNAc). Has hemolytic activity towards human (A, B and O-type), rabbit and rat erythrocytes, but not towards mouse, chicken or horse erythrocytes. Forms ion-permeable transmembrane pores in the erythrocyte membrane as well as in artificial liposomes containing human erythrocyte membrane lipids LacCer, Gb4Cer and galactosyl ceramide (GalCer) leading to destruction of the membrane. Has hemagglutinating activity towards rabbit, human and rat erythrocytes, and at relatively high concentrations towards chicken and horse erythrocytes, but not towards mouse erythrocytes. Has dose-dependent cytotoxic effect on Madin-Darby canine kidney (MDCK), African green monkey kidney (Vero) and human epithelia carcinoma (HeLa) cell lines, but Chinese hamster ovary (CHO), rat sarcoma (XC) and potoroo rat kangaroo kidney (PtK1) cells are highly resistant to the cytotoxic effect of this protein. Impairs malaria parasite development in malaria parasite infected transgenic A.stephensi mosquitoes expressing this protein specifically in their midguts. Binds to ookinetes and leads to strong dose-dependent inhibition of ookinete formation in vitro. Leads to severely impaired oocyst formation and significantly reduced sporozoite production of rodent malaria parasite P.berghei in the salivary glands of the transgenic mosquitoes. The parasite transmission to uninfected mice (vectorial competence) of these mosquitoes is significantly impaired. Also leads to severely impaired oocyst formation of human malaria parasite P.falciparum in transgenic mosquitoes fed on mature P.falciparum gametocyte cultures. May be involved in defense mechanisms acting as a toxic protein to foreign microorganisms. May act in defense against predators. In Pseudocnus echinatus (Sea cucumber), this protein is Galactose/N-acetylgalactosamine-binding lectin CEL-III.